Reading from the N-terminus, the 142-residue chain is Large ribosomal subunit protein uL13 (142 aa).

It belongs to the universal ribosomal protein uL13 family. In terms of assembly, part of the 50S ribosomal subunit.

Functionally, this protein is one of the early assembly proteins of the 50S ribosomal subunit, although it is not seen to bind rRNA by itself. It is important during the early stages of 50S assembly. The protein is Large ribosomal subunit protein uL13 of Pseudomonas syringae pv. syringae (strain B728a).